A 355-amino-acid polypeptide reads, in one-letter code: Protein RecA (355 aa).

Position 65–72 (glycine 65–threonine 72) interacts with ATP.

The protein belongs to the RecA family.

The protein localises to the cytoplasm. Functionally, can catalyze the hydrolysis of ATP in the presence of single-stranded DNA, the ATP-dependent uptake of single-stranded DNA by duplex DNA, and the ATP-dependent hybridization of homologous single-stranded DNAs. It interacts with LexA causing its activation and leading to its autocatalytic cleavage. The sequence is that of Protein RecA from Pseudomonas putida (Arthrobacter siderocapsulatus).